The sequence spans 238 residues: Purine nucleoside phosphorylase DeoD-type (238 aa).

An a purine D-ribonucleoside-binding site is contributed by His5. Phosphate-binding positions include Gly21, Arg25, Arg44, and 88 to 91; that span reads RVGS. A purine D-ribonucleoside is bound by residues 180–182 and 204–205; these read EME and SD. Catalysis depends on Asp205, which acts as the Proton donor.

Belongs to the PNP/UDP phosphorylase family. As to quaternary structure, homohexamer; trimer of homodimers.

The catalysed reaction is a purine D-ribonucleoside + phosphate = a purine nucleobase + alpha-D-ribose 1-phosphate. It catalyses the reaction a purine 2'-deoxy-D-ribonucleoside + phosphate = a purine nucleobase + 2-deoxy-alpha-D-ribose 1-phosphate. Functionally, catalyzes the reversible phosphorolytic breakdown of the N-glycosidic bond in the beta-(deoxy)ribonucleoside molecules, with the formation of the corresponding free purine bases and pentose-1-phosphate. The sequence is that of Purine nucleoside phosphorylase DeoD-type from Photorhabdus laumondii subsp. laumondii (strain DSM 15139 / CIP 105565 / TT01) (Photorhabdus luminescens subsp. laumondii).